The following is a 543-amino-acid chain: T-complex protein 1 subunit gamma (543 aa).

This sequence belongs to the TCP-1 chaperonin family.

The protein localises to the cytoplasm. Functionally, molecular chaperone; assists the folding of proteins upon ATP hydrolysis. Known to play a role, in vitro, in the folding of actin and tubulin. Plays a role in microtubule polymerization. The protein is T-complex protein 1 subunit gamma of Caenorhabditis elegans.